The sequence spans 155 residues: Ribonuclease H (155 aa).

The RNase H type-1 domain maps to 1-142 (MLKQVEIFTD…CDELARAAAM (142 aa)). Mg(2+)-binding residues include D10, E48, D70, and D134.

It belongs to the RNase H family. As to quaternary structure, monomer. Mg(2+) is required as a cofactor.

It is found in the cytoplasm. The catalysed reaction is Endonucleolytic cleavage to 5'-phosphomonoester.. In terms of biological role, endonuclease that specifically degrades the RNA of RNA-DNA hybrids. The chain is Ribonuclease H from Escherichia coli O127:H6 (strain E2348/69 / EPEC).